The following is a 105-amino-acid chain: Antimicrobial peptide 1 (105 aa).

The first 26 residues, 1–26, serve as a signal peptide directing secretion; that stretch reads METKRLAYVMFVLVCLFLAMAQPSQA. 3 disulfides stabilise this stretch: cysteine 37-cysteine 93, cysteine 47-cysteine 105, and cysteine 49-cysteine 77.

In terms of tissue distribution, detected at higher levels in needles and twigs from canker-resistant seedlings than in needles from canker-susceptible plants. During summer, detected on cankered, healthy and marginal bark. During winter, detected at lower levels in cankered bark and bark from the canker margin than in healthy bark (at protein level).

The protein localises to the secreted. It is found in the cell wall. Functionally, antimicrobial peptide. The protein is Antimicrobial peptide 1 of Pinus monticola (Western white pine).